A 512-amino-acid chain; its full sequence is ATP synthase subunit alpha (512 aa).

169 to 176 (GDRQTGKT) lines the ATP pocket.

It belongs to the ATPase alpha/beta chains family. In terms of assembly, F-type ATPases have 2 components, CF(1) - the catalytic core - and CF(0) - the membrane proton channel. CF(1) has five subunits: alpha(3), beta(3), gamma(1), delta(1), epsilon(1). CF(0) has three main subunits: a(1), b(2) and c(9-12). The alpha and beta chains form an alternating ring which encloses part of the gamma chain. CF(1) is attached to CF(0) by a central stalk formed by the gamma and epsilon chains, while a peripheral stalk is formed by the delta and b chains.

The protein resides in the cell inner membrane. The catalysed reaction is ATP + H2O + 4 H(+)(in) = ADP + phosphate + 5 H(+)(out). Its function is as follows. Produces ATP from ADP in the presence of a proton gradient across the membrane. The alpha chain is a regulatory subunit. This Rickettsia bellii (strain OSU 85-389) protein is ATP synthase subunit alpha.